We begin with the raw amino-acid sequence, 931 residues long: Histone-lysine N-methyltransferase EZ1 (931 aa).

Residues 1–30 (MEAEAAAAVVASSASASASAGRSRPSSSAA) show a composition bias toward low complexity. Disordered stretches follow at residues 1 to 37 (MEAEAAAAVVASSASASASAGRSRPSSSAAQVTSNSA), 372 to 450 (PTHS…ITNR), and 491 to 549 (RNGN…YDSS). Polar residues predominate over residues 375 to 385 (SSDNVMNQPGS). Residues 386–398 (NRKKNGSSGRKTK) show a composition bias toward basic residues. The segment covering 423–433 (SNKSPQHSPSP) has biased composition (polar residues). Residues 500 to 509 (SSQQSSPSTR) are compositionally biased toward low complexity. Basic and acidic residues predominate over residues 528–549 (AHNDSTEEANNRHSATDGYDSS). The 51-residue stretch at 565 to 615 (YLRSWKAIEQGLLVKGLEIFGRNSCLIARNLLGGMKTCKDVFQYMNYIENN) folds into the SANT domain. The CXC domain occupies 664–763 (FKRITERKDQ…TLGVPNQRGD (100 aa)). The 116-residue stretch at 778–893 (QRVLLGRSDV…AGEELFYDYR (116 aa)) folds into the SET domain. Over residues 903–915 (ARKPEASGAKDDG) the composition is skewed to basic and acidic residues. Residues 903 to 931 (ARKPEASGAKDDGQPFNGRAKKLAQNNRG) are disordered.

Belongs to the class V-like SAM-binding methyltransferase superfamily. Histone-lysine methyltransferase family. EZ subfamily. In terms of tissue distribution, widely expressed.

It localises to the nucleus. It catalyses the reaction L-lysyl(27)-[histone H3] + 3 S-adenosyl-L-methionine = N(6),N(6),N(6)-trimethyl-L-lysyl(27)-[histone H3] + 3 S-adenosyl-L-homocysteine + 3 H(+). Its function is as follows. Polycomb group (PcG) protein. Catalytic subunit of some PcG multiprotein complex, which methylates 'Lys-27' of histone H3, leading to transcriptional repression of the affected target genes. PcG proteins are not required to initiate repression, but to maintain it during later stages of development. The protein is Histone-lysine N-methyltransferase EZ1 (EZ1) of Zea mays (Maize).